A 305-amino-acid chain; its full sequence is UDP-3-O-acyl-N-acetylglucosamine deacetylase (305 aa).

3 residues coordinate Zn(2+): His-79, His-238, and Asp-242. His-265 serves as the catalytic Proton donor.

The protein belongs to the LpxC family. Zn(2+) serves as cofactor.

It carries out the reaction a UDP-3-O-[(3R)-3-hydroxyacyl]-N-acetyl-alpha-D-glucosamine + H2O = a UDP-3-O-[(3R)-3-hydroxyacyl]-alpha-D-glucosamine + acetate. It participates in glycolipid biosynthesis; lipid IV(A) biosynthesis; lipid IV(A) from (3R)-3-hydroxytetradecanoyl-[acyl-carrier-protein] and UDP-N-acetyl-alpha-D-glucosamine: step 2/6. In terms of biological role, catalyzes the hydrolysis of UDP-3-O-myristoyl-N-acetylglucosamine to form UDP-3-O-myristoylglucosamine and acetate, the committed step in lipid A biosynthesis. The polypeptide is UDP-3-O-acyl-N-acetylglucosamine deacetylase (Vibrio cholerae serotype O1 (strain ATCC 39541 / Classical Ogawa 395 / O395)).